The following is a 545-amino-acid chain: CTP synthase (545 aa).

The amidoligase domain stretch occupies residues 1 to 265; it reads MSRFIFVTGG…DAIVVEKFGL (265 aa). CTP is bound at residue Ser-13. Ser-13 lines the UTP pocket. 14 to 19 is a binding site for ATP; it reads SLGKGI. Position 54 (Tyr-54) interacts with L-glutamine. Asp-71 lines the ATP pocket. Mg(2+)-binding residues include Asp-71 and Glu-139. CTP contacts are provided by residues 146–148, 186–191, and Lys-222; these read DIE and KTKPTQ. Residues 186-191 and Lys-222 contribute to the UTP site; that span reads KTKPTQ. Positions 290-541 constitute a Glutamine amidotransferase type-1 domain; that stretch reads TVGMVGKYIE…VAAALAEQKA (252 aa). L-glutamine is bound at residue Gly-351. Catalysis depends on Cys-378, which acts as the Nucleophile; for glutamine hydrolysis. Residues 379–382, Glu-402, and Arg-469 contribute to the L-glutamine site; that span reads LGMQ. Residues His-514 and Glu-516 contribute to the active site.

This sequence belongs to the CTP synthase family. As to quaternary structure, homotetramer.

The enzyme catalyses UTP + L-glutamine + ATP + H2O = CTP + L-glutamate + ADP + phosphate + 2 H(+). It carries out the reaction L-glutamine + H2O = L-glutamate + NH4(+). It catalyses the reaction UTP + NH4(+) + ATP = CTP + ADP + phosphate + 2 H(+). It functions in the pathway pyrimidine metabolism; CTP biosynthesis via de novo pathway; CTP from UDP: step 2/2. With respect to regulation, allosterically activated by GTP, when glutamine is the substrate; GTP has no effect on the reaction when ammonia is the substrate. The allosteric effector GTP functions by stabilizing the protein conformation that binds the tetrahedral intermediate(s) formed during glutamine hydrolysis. Inhibited by the product CTP, via allosteric rather than competitive inhibition. Functionally, catalyzes the ATP-dependent amination of UTP to CTP with either L-glutamine or ammonia as the source of nitrogen. Regulates intracellular CTP levels through interactions with the four ribonucleotide triphosphates. This is CTP synthase from Alcanivorax borkumensis (strain ATCC 700651 / DSM 11573 / NCIMB 13689 / SK2).